A 502-amino-acid polypeptide reads, in one-letter code: Cytochrome P450 2J3 (502 aa).

A heme-binding site is contributed by Cys-448.

It belongs to the cytochrome P450 family. It depends on heme as a cofactor. As to expression, abundantly expressed in heart and liver.

It is found in the endoplasmic reticulum membrane. The protein resides in the microsome membrane. The catalysed reaction is an organic molecule + reduced [NADPH--hemoprotein reductase] + O2 = an alcohol + oxidized [NADPH--hemoprotein reductase] + H2O + H(+). This enzyme metabolizes arachidonic acid predominantly via a NADPH-dependent olefin epoxidation mainly to 14,15-, 11,12-, and 8,9-epoxyeicosatrienoic acids (EET). It also acts as an omega-1-hydroxylase by metabolizing arachidonic acid to 19-hydroxyeicosatetraenoic acid (19-OH-AA). This chain is Cytochrome P450 2J3 (Cyp2j3), found in Rattus norvegicus (Rat).